Here is a 513-residue protein sequence, read N- to C-terminus: GMP synthase [glutamine-hydrolyzing] (513 aa).

Residues 8–198 (MILVLDFGSQ…VFGVCECVGE (191 aa)) form the Glutamine amidotransferase type-1 domain. The active-site Nucleophile is Cys85. Catalysis depends on residues His172 and Glu174. Positions 199 to 388 (WSMENFIEIE…LGIPDEIVWR (190 aa)) constitute a GMPS ATP-PPase domain. Residue 226-232 (SGGVDSS) coordinates ATP.

Homodimer.

It carries out the reaction XMP + L-glutamine + ATP + H2O = GMP + L-glutamate + AMP + diphosphate + 2 H(+). Its pathway is purine metabolism; GMP biosynthesis; GMP from XMP (L-Gln route): step 1/1. Its function is as follows. Catalyzes the synthesis of GMP from XMP. The polypeptide is GMP synthase [glutamine-hydrolyzing] (Bacillus licheniformis (strain ATCC 14580 / DSM 13 / JCM 2505 / CCUG 7422 / NBRC 12200 / NCIMB 9375 / NCTC 10341 / NRRL NRS-1264 / Gibson 46)).